Here is a 283-residue protein sequence, read N- to C-terminus: UPF0276 protein Anae109_1558 (283 aa).

Belongs to the UPF0276 family.

This is UPF0276 protein Anae109_1558 from Anaeromyxobacter sp. (strain Fw109-5).